We begin with the raw amino-acid sequence, 111 residues long: Large ribosomal subunit protein uL24 (111 aa).

The interval 43-62 (TRHKKKDQTTKRAAKQSTGK) is disordered.

This sequence belongs to the universal ribosomal protein uL24 family. As to quaternary structure, part of the 50S ribosomal subunit.

Functionally, one of two assembly initiator proteins, it binds directly to the 5'-end of the 23S rRNA, where it nucleates assembly of the 50S subunit. In terms of biological role, one of the proteins that surrounds the polypeptide exit tunnel on the outside of the subunit. This chain is Large ribosomal subunit protein uL24, found in Mycoplasma pneumoniae (strain ATCC 29342 / M129 / Subtype 1) (Mycoplasmoides pneumoniae).